A 226-amino-acid polypeptide reads, in one-letter code: Cobalt transport protein CbiM 2 (226 aa).

6 helical membrane-spanning segments follow: residues 6–26, 43–63, 75–95, 107–127, 135–155, and 181–201; these read GFLPVEHAIGWSVASAPVVAY, MLLGVAAAFTFVLSALKMPSV, LGAILFGPSAVAPIGAVVLLF, TLGANIFSMAIVGPFAAAAVF, FPFGVGVFLAASLGDLLTYVT, and VFALTQIPLAISEGLLTVVVM.

This sequence belongs to the CbiM family. Forms an energy-coupling factor (ECF) transporter complex composed of an ATP-binding protein (A component, CbiO), a transmembrane protein (T component, CbiQ) and 2 possible substrate-capture proteins (S components, CbiM and CbiN) of unknown stoichimetry.

The protein resides in the cell inner membrane. Its pathway is cofactor biosynthesis; adenosylcobalamin biosynthesis. In terms of biological role, part of the energy-coupling factor (ECF) transporter complex CbiMNOQ involved in cobalt import. This chain is Cobalt transport protein CbiM 2, found in Pelobacter propionicus (strain DSM 2379 / NBRC 103807 / OttBd1).